The sequence spans 462 residues: MNVAGGGTGTTAGSAGNNNTLPMAQLADGWLELESDPGLFTLLLEDFGCHDVQVEEVYDLQKPIESPYGFIFLFRWIEERRARRKIVETTAEIFVKDEEAISSIFFAQQVVPNSCATHALLSVLLNCNENNLQLGETLSRLKAHTKGMSPENKGLAIGNTPELACAHNSHAMPQARRRLERTGAGVASCRFTGEAFHFVSFVPINGQLFELDGLKPYPMNHGCWEEHEDWTDKFRRVMAERLGIATGEQDIRFNLMAVVPDRRIAITHKLKMLRTNQAIVSGTLQKLLKADEQGERDEQQRPDTPNTLLEPSAFTARDLQSLLKNLDTEIAINEQHLADENDRRQMFKVDASRRTHNYDKFICTFLTMLAHQGVLGELVSQHLLPSKKISGQSAANRLNKQNSAAASTANSSAGATAGGAKSQQQQQQQQQPQQPQTPKNGKSPGKTPGRRRKGRNKCRKRK.

The region spanning 29-260 (GWLELESDPG…IRFNLMAVVP (232 aa)) is the UCH catalytic domain. The active-site Nucleophile is the Cys115. His197 (proton donor) is an active-site residue. In terms of domain architecture, ULD spans 357–385 (NYDKFICTFLTMLAHQGVLGELVSQHLLP). Positions 387 to 462 (KKISGQSAAN…KGRNKCRKRK (76 aa)) are positively charged C-terminal tail required for binding nucleosomes. The disordered stretch occupies residues 394 to 462 (AANRLNKQNS…KGRNKCRKRK (69 aa)). Over residues 399–447 (NKQNSAAASTANSSAGATAGGAKSQQQQQQQQQPQQPQTPKNGKSPGKT) the composition is skewed to low complexity. Positions 448–462 (PGRRRKGRNKCRKRK) are enriched in basic residues.

Belongs to the peptidase C12 family. BAP1 subfamily. As to quaternary structure, catalytic component of the polycomb repressive deubiquitinase (PR-DUB) complex, at least composed of caly/calypso, Asx and sba (MBD5/6 homolog). The PR-DUB complex associates with nucleosomes to mediate deubiquitination of histone H2AK118ub1 substrates; the association requires the positively charged C-terminal tail of caly, probably due to direct binding of DNA. Interacts (via ULD domain) with Asx (via DEUBAD domain); the interaction produces a stable heterodimer with a composite binding site for ubiquitin. Homodimerizes (via coiled-coil hinge-region between the UCH and ULD domains) to mediate assembly of 2 copies of the caly-Asx heterodimer into a bisymmetric tetramer; dimerization enhances PR-DUB association with nucleosomes.

Its subcellular location is the nucleus. It carries out the reaction Thiol-dependent hydrolysis of ester, thioester, amide, peptide and isopeptide bonds formed by the C-terminal Gly of ubiquitin (a 76-residue protein attached to proteins as an intracellular targeting signal).. Functionally, catalytic component of the polycomb repressive deubiquitinase (PR-DUB) complex, a complex that specifically mediates deubiquitination of histone H2A monoubiquitinated at 'Lys-119' (H2AK118ub1). Mediates bisymmetric organization of the PR-DUB complex and is involved in association with nucleosomes to mediate deubiquitination. Does not deubiquitinate monoubiquitinated histone H2B. Required to maintain the transcriptionally repressive state of homeotic genes throughout development. The PR-DUB complex has weak or no activity toward 'Lys-48'- and 'Lys-63'-linked polyubiquitin chains. Polycomb group (PcG) protein. This is Ubiquitin carboxyl-terminal hydrolase calypso from Drosophila virilis (Fruit fly).